The chain runs to 32 residues: Cytochrome b6-f complex subunit 7 (32 aa).

The chain crosses the membrane as a helical span at residues 9–27 (AAVFWVLIPVGLAGGALLL).

The protein belongs to the PetM family. In terms of assembly, the 4 large subunits of the cytochrome b6-f complex are cytochrome b6, subunit IV (17 kDa polypeptide, PetD), cytochrome f and the Rieske protein, while the 4 small subunits are PetG, PetL, PetM and PetN. The complex functions as a dimer.

The protein resides in the cellular thylakoid membrane. Functionally, component of the cytochrome b6-f complex, which mediates electron transfer between photosystem II (PSII) and photosystem I (PSI), cyclic electron flow around PSI, and state transitions. This is Cytochrome b6-f complex subunit 7 from Prochlorococcus marinus (strain MIT 9303).